The following is a 254-amino-acid chain: Ubiquinone/menaquinone biosynthesis C-methyltransferase UbiE (254 aa).

Residues threonine 77, aspartate 98, 126–127 (NA), and serine 143 contribute to the S-adenosyl-L-methionine site.

This sequence belongs to the class I-like SAM-binding methyltransferase superfamily. MenG/UbiE family.

The enzyme catalyses a 2-demethylmenaquinol + S-adenosyl-L-methionine = a menaquinol + S-adenosyl-L-homocysteine + H(+). It carries out the reaction a 2-methoxy-6-(all-trans-polyprenyl)benzene-1,4-diol + S-adenosyl-L-methionine = a 5-methoxy-2-methyl-3-(all-trans-polyprenyl)benzene-1,4-diol + S-adenosyl-L-homocysteine + H(+). Its pathway is quinol/quinone metabolism; menaquinone biosynthesis; menaquinol from 1,4-dihydroxy-2-naphthoate: step 2/2. The protein operates within cofactor biosynthesis; ubiquinone biosynthesis. In terms of biological role, methyltransferase required for the conversion of demethylmenaquinol (DMKH2) to menaquinol (MKH2) and the conversion of 2-polyprenyl-6-methoxy-1,4-benzoquinol (DDMQH2) to 2-polyprenyl-3-methyl-6-methoxy-1,4-benzoquinol (DMQH2). The polypeptide is Ubiquinone/menaquinone biosynthesis C-methyltransferase UbiE (Hydrogenovibrio crunogenus (strain DSM 25203 / XCL-2) (Thiomicrospira crunogena)).